The sequence spans 342 residues: UDP-N-acetylglucosamine transporter YEA4 (342 aa).

The Cytoplasmic portion of the chain corresponds to 1-6 (MWNSLK). Residues 7-27 (AFALVFGGCCSNVITFETLMS) traverse the membrane as a helical segment. Residues 28-35 (NETGSINN) are Lumenal-facing. The helical transmembrane segment at 36-56 (LITFCQFLFVTCQGLPEFLDV) threads the bilayer. Over 57 to 61 (HQPFP) the chain is Cytoplasmic. The chain crosses the membrane as a helical span at residues 62 to 82 (YFKPLKTPLHVYVITVVLFYI). The Lumenal segment spans residues 83 to 96 (SSTTNNNVFKYNIS). A helical membrane pass occupies residues 97–117 (IPIHIVFRCFGTVITMFTCWL). At 118–123 (LNGRKY) the chain is on the cytoplasmic side. The chain crosses the membrane as a helical span at residues 124-144 (TKIQILSTLFLTIGAIIASLF). The Lumenal portion of the chain corresponds to 145-168 (KDADFRYQDLKLQAWKIGSDQSVD). Residues 169 to 189 (LTFIFGICILVLSSFTSSLLS) form a helical membrane-spanning segment. Over 190 to 253 (AYNERTYQKY…GGKILVPREE (64 aa)) the chain is Cytoplasmic. The helical transmembrane segment at 254 to 274 (TLLLFNVLTQYFCVKGVNILA) threads the bilayer. Topologically, residues 275–307 (SKTNALTLSITLLVRKFISLLLSVRLFDNNLSY) are lumenal. The chain crosses the membrane as a helical span at residues 308–328 (TGYIGVYLVFFGAFIYSLGSI). The Cytoplasmic segment spans residues 329-342 (HPRQNDKGAIKKSK).

Belongs to the nucleotide-sugar transporter family. SLC35B subfamily.

The protein resides in the endoplasmic reticulum. Its subcellular location is the endoplasmic reticulum membrane. Its function is as follows. Sugar transporter that specifically mediates the transport of UDP-N-acetylglucosamine (UDP-GlcNAc) and is required for cell wall chitin synthesis. The chain is UDP-N-acetylglucosamine transporter YEA4 (YEA4) from Saccharomyces cerevisiae (strain ATCC 204508 / S288c) (Baker's yeast).